The following is a 61-amino-acid chain: Small ribosomal subunit protein uS14B (61 aa).

Residues Cys-24, Cys-27, Cys-40, and Cys-43 each contribute to the Zn(2+) site.

Belongs to the universal ribosomal protein uS14 family. Zinc-binding uS14 subfamily. In terms of assembly, part of the 30S ribosomal subunit. Contacts proteins S3 and S10. Zn(2+) serves as cofactor.

Its function is as follows. Binds 16S rRNA, required for the assembly of 30S particles and may also be responsible for determining the conformation of the 16S rRNA at the A site. This is Small ribosomal subunit protein uS14B from Saccharopolyspora erythraea (strain ATCC 11635 / DSM 40517 / JCM 4748 / NBRC 13426 / NCIMB 8594 / NRRL 2338).